A 28-amino-acid chain; its full sequence is ALFSILRGLKKLGKMGQAFVNCEIYKKC.

Residues Cys22 and Cys28 are joined by a disulfide bond.

In terms of tissue distribution, expressed by the skin glands.

The protein resides in the secreted. Antimicrobial activity against Gram-negative bacterium E.coli. In Lithobates palustris (Pickerel frog), this protein is Palustrin-1a.